We begin with the raw amino-acid sequence, 421 residues long: MEGSPVTSVRLSSVVPASVVGENKPRQLTPMDLAMKLHYVRAVYFFKGARDFTVADVKNTMFTLQSLLQSYHHVSGRIRMSDNDNDTSAAAIPYIRCNDSGIRVVEANVEEFTVEKWLELDDRSIDHRFLVYDHVLGPDLTFSPLVFLQITQFKCGGLCIGLSWAHILGDVFSASTFMKTLGQLVSGHAPTKPVYPKTPELTSHARNDGEAISIEKIDSVGEYWLLTNKCKMGRHIFNFSLNHIDSLMAKYTTRDQPFSEVDILYALIWKSLLNIRGETNTNVITICDRKKSSTCWNEDLVISVVEKNDEMVGISELAALIAGEKREENGAIKRMIEQDKGSSDFFTYGANLTFVNLDEIDMYELEINGGKPDFVNYTIHGVGDKGVVLVFPKQNFARIVSVVMPEEDLAKLKEEVTNMII.

Met-1 carries the post-translational modification N-acetylmethionine.

It belongs to the plant acyltransferase family. In terms of tissue distribution, expressed at high levels in the epidermis of stems and young siliques. Expressed in flowers.

The protein resides in the endoplasmic reticulum. Its subcellular location is the nucleus. Functionally, involved in biosynthesis of the epicuticular wax. Plays a role in very-long-chain fatty acid (VLCFA) biosynthesis and is required for C28 fatty acid elongation in stem. Despite its classification as a BAHD acyltransferase based on sequence homology, CER2 does not seem to share the catalytic mechanism of the members of the BAHD family. The chain is Protein ECERIFERUM 2 (CER2) from Arabidopsis thaliana (Mouse-ear cress).